The primary structure comprises 202 residues: LexA repressor (202 aa).

The segment at residues 28–48 is a DNA-binding region (H-T-H motif); that stretch reads RAEIASRLGFRSPNAAEEHLK. Active-site for autocatalytic cleavage activity residues include serine 119 and lysine 156.

The protein belongs to the peptidase S24 family. Homodimer.

The catalysed reaction is Hydrolysis of Ala-|-Gly bond in repressor LexA.. Represses a number of genes involved in the response to DNA damage (SOS response), including recA and lexA. Binds to the 16 bp palindromic sequence 5'-CTGTATATATATACAG-3'. In the presence of single-stranded DNA, RecA interacts with LexA causing an autocatalytic cleavage which disrupts the DNA-binding part of LexA, leading to derepression of the SOS regulon and eventually DNA repair. The protein is LexA repressor of Sodalis glossinidius (strain morsitans).